Consider the following 236-residue polypeptide: Large ribosomal subunit protein uL1 (236 aa).

This sequence belongs to the universal ribosomal protein uL1 family. Part of the 50S ribosomal subunit.

Functionally, binds directly to 23S rRNA. The L1 stalk is quite mobile in the ribosome, and is involved in E site tRNA release. In terms of biological role, protein L1 is also a translational repressor protein, it controls the translation of the L11 operon by binding to its mRNA. The protein is Large ribosomal subunit protein uL1 of Heliobacterium modesticaldum (strain ATCC 51547 / Ice1).